Reading from the N-terminus, the 845-residue chain is Protein P (845 aa).

Positions 1 to 179 (MPLSYQHFRK…FCGSPYSWEQ (179 aa)) are terminal protein domain (TP). The segment at 180-348 (ELQHGRLVIK…YCLSHLVNLR (169 aa)) is spacer. Residues 226–245 (GLQPHQGPLASSQPGRSGSI) are disordered. A polymerase/reverse transcriptase domain (RT) region spans residues 349–692 (EDWGPCDEHG…YMNLYPVARQ (344 aa)). Residues 359 to 602 (EHHIRIPRTP…YSLNFMGYII (244 aa)) form the Reverse transcriptase domain. The Mg(2+) site is built by Asp431, Asp553, and Asp554.

The protein belongs to the hepadnaviridae P protein family.

It carries out the reaction DNA(n) + a 2'-deoxyribonucleoside 5'-triphosphate = DNA(n+1) + diphosphate. It catalyses the reaction Endonucleolytic cleavage to 5'-phosphomonoester.. With respect to regulation, activated by host HSP70 and HSP40 in vitro to be able to bind the epsilon loop of the pgRNA. Because deletion of the RNase H region renders the protein partly chaperone-independent, the chaperones may be needed indirectly to relieve occlusion of the RNA-binding site by this domain. Inhibited by several reverse-transcriptase inhibitors: Lamivudine, Adefovir and Entecavir. Its function is as follows. Multifunctional enzyme that converts the viral RNA genome into dsDNA in viral cytoplasmic capsids. This enzyme displays a DNA polymerase activity that can copy either DNA or RNA templates, and a ribonuclease H (RNase H) activity that cleaves the RNA strand of RNA-DNA heteroduplexes in a partially processive 3'- to 5'-endonucleasic mode. Neo-synthesized pregenomic RNA (pgRNA) are encapsidated together with the P protein, and reverse-transcribed inside the nucleocapsid. Initiation of reverse-transcription occurs first by binding the epsilon loop on the pgRNA genome, and is initiated by protein priming, thereby the 5'-end of (-)DNA is covalently linked to P protein. Partial (+)DNA is synthesized from the (-)DNA template and generates the relaxed circular DNA (RC-DNA) genome. After budding and infection, the RC-DNA migrates in the nucleus, and is converted into a plasmid-like covalently closed circular DNA (cccDNA). The activity of P protein does not seem to be necessary for cccDNA generation, and is presumably released from (+)DNA by host nuclear DNA repair machinery. The sequence is that of Protein P from Homo sapiens (Human).